The following is a 109-amino-acid chain: MYTRNIGLDVKLPESECNDPHCPYHGKLSVRGQVLTGKVVSANMTKSAVVAREYQQYIPKYERKATKIKKYHVHVPDCIKIKPGDTVRFAECRKLAKTISFVIVEKVNQ.

Belongs to the universal ribosomal protein uS17 family. As to quaternary structure, part of the 30S ribosomal subunit.

In terms of biological role, one of the primary rRNA binding proteins, it binds specifically to the 5'-end of 16S ribosomal RNA. The polypeptide is Small ribosomal subunit protein uS17 (Thermoplasma acidophilum (strain ATCC 25905 / DSM 1728 / JCM 9062 / NBRC 15155 / AMRC-C165)).